Reading from the N-terminus, the 371-residue chain is UPF0284 protein tll2306 (371 aa).

This sequence belongs to the UPF0284 family.

In Thermosynechococcus vestitus (strain NIES-2133 / IAM M-273 / BP-1), this protein is UPF0284 protein tll2306.